The chain runs to 484 residues: tRNA sulfurtransferase (484 aa).

Residues 63-167 (QAFGERLACI…GDKLYMVTKR (105 aa)) form the THUMP domain. ATP-binding positions include 185-186 (LI), Lys267, Gly289, and Gln298. Cysteines 346 and 458 form a disulfide. Positions 406–484 (IDTNEVVIDI…GYHNVKVYRP (79 aa)) constitute a Rhodanese domain. The Cysteine persulfide intermediate role is filled by Cys458.

The protein belongs to the ThiI family.

It is found in the cytoplasm. It catalyses the reaction [ThiI sulfur-carrier protein]-S-sulfanyl-L-cysteine + a uridine in tRNA + 2 reduced [2Fe-2S]-[ferredoxin] + ATP + H(+) = [ThiI sulfur-carrier protein]-L-cysteine + a 4-thiouridine in tRNA + 2 oxidized [2Fe-2S]-[ferredoxin] + AMP + diphosphate. It carries out the reaction [ThiS sulfur-carrier protein]-C-terminal Gly-Gly-AMP + S-sulfanyl-L-cysteinyl-[cysteine desulfurase] + AH2 = [ThiS sulfur-carrier protein]-C-terminal-Gly-aminoethanethioate + L-cysteinyl-[cysteine desulfurase] + A + AMP + 2 H(+). The protein operates within cofactor biosynthesis; thiamine diphosphate biosynthesis. Catalyzes the ATP-dependent transfer of a sulfur to tRNA to produce 4-thiouridine in position 8 of tRNAs, which functions as a near-UV photosensor. Also catalyzes the transfer of sulfur to the sulfur carrier protein ThiS, forming ThiS-thiocarboxylate. This is a step in the synthesis of thiazole, in the thiamine biosynthesis pathway. The sulfur is donated as persulfide by IscS. In Shewanella sp. (strain MR-4), this protein is tRNA sulfurtransferase.